Here is a 271-residue protein sequence, read N- to C-terminus: Fork head domain-containing protein FD5 (271 aa).

The fork-head DNA-binding region spans 12–103 (QKPPYSYISL…FDMFENGSLL (92 aa)).

As to expression, expressed in early embryogenesis in 14 symmetrical pairs of segmentally arranged neuroblasts and in developing peripheral nervous system. Also, later in embryogenesis, in a cluster of cells in head region.

It is found in the nucleus. In terms of biological role, involved in development during embryogenesis. In Drosophila melanogaster (Fruit fly), this protein is Fork head domain-containing protein FD5 (fd96Cb).